A 59-amino-acid chain; its full sequence is uncharacterized protein (59 aa).

Residues 1 to 21 (MYLFYVLLSSLFLSALIYVIG) form the signal peptide. Over 22 to 24 (KSH) the chain is Extracellular. Residues 25–45 (PNLFMFISLFVNVVTILYLVF) traverse the membrane as a helical segment. Residues 46 to 59 (KDYGQYIIAKPINT) are Cytoplasmic-facing.

Its subcellular location is the host membrane. This is an uncharacterized protein from Acidianus convivator (ABV).